The sequence spans 183 residues: Adenine phosphoribosyltransferase (183 aa).

The protein belongs to the purine/pyrimidine phosphoribosyltransferase family. In terms of assembly, homodimer.

The protein resides in the cytoplasm. The enzyme catalyses AMP + diphosphate = 5-phospho-alpha-D-ribose 1-diphosphate + adenine. Its pathway is purine metabolism; AMP biosynthesis via salvage pathway; AMP from adenine: step 1/1. Its function is as follows. Catalyzes a salvage reaction resulting in the formation of AMP, that is energically less costly than de novo synthesis. The polypeptide is Adenine phosphoribosyltransferase (Shewanella sp. (strain ANA-3)).